The primary structure comprises 288 residues: MAEKKQWHETLHDQFGQYFAVDNVLYHEKTDHQDLIIFENAAFGRVMALDGVVQTTERDEFIYHEMMTHVPLLAHGHAKHVLIIGGGDGAMLREVTRHKNVESITMVEIDAGVVSFCRQYLPNHNAGSYDDPRFKLVIDDGVNFVNQTSQTFDVIISDCTDPIGPGESLFTSAFYEGCKRCLNPAGIFVAQNGVCFLQQEEAIDSHRKLSHYFSDVGFYQAAIPTYYGGIMTFAWATDNDALRHLSTEIIQARFLASGLKCRYYNPAVHTAAFALPQYLQDALASQPS.

Residues 9 to 238 form the PABS domain; that stretch reads ETLHDQFGQY…GIMTFAWATD (230 aa). Residue glutamine 33 coordinates S-methyl-5'-thioadenosine. Residues histidine 64 and aspartate 88 each coordinate spermidine. S-methyl-5'-thioadenosine-binding positions include glutamate 108 and 140-141; that span reads DG. The Proton acceptor role is filled by aspartate 158. 158-161 is a spermidine binding site; the sequence is DCTD. Residue proline 165 coordinates S-methyl-5'-thioadenosine.

The protein belongs to the spermidine/spermine synthase family. As to quaternary structure, homodimer or homotetramer.

The protein localises to the cytoplasm. The catalysed reaction is S-adenosyl 3-(methylsulfanyl)propylamine + putrescine = S-methyl-5'-thioadenosine + spermidine + H(+). It participates in amine and polyamine biosynthesis; spermidine biosynthesis; spermidine from putrescine: step 1/1. Functionally, catalyzes the irreversible transfer of a propylamine group from the amino donor S-adenosylmethioninamine (decarboxy-AdoMet) to putrescine (1,4-diaminobutane) to yield spermidine. The sequence is that of Polyamine aminopropyltransferase from Escherichia coli O81 (strain ED1a).